We begin with the raw amino-acid sequence, 249 residues long: Probable transcriptional regulatory protein mll3945 (249 aa).

This sequence belongs to the TACO1 family.

The protein resides in the cytoplasm. The chain is Probable transcriptional regulatory protein mll3945 from Mesorhizobium japonicum (strain LMG 29417 / CECT 9101 / MAFF 303099) (Mesorhizobium loti (strain MAFF 303099)).